Here is a 647-residue protein sequence, read N- to C-terminus: Shugoshin-2 (647 aa).

At Ser-7 the chain carries Phosphoserine. Coiled-coil stretches lie at residues 28–87 (SKAQ…FHEE) and 125–145 (DEES…HDVS). The tract at residues 171–295 (REANVFSDTQ…DTVIQSTPTK (125 aa)) is disordered. Positions 200–210 (NLSNSKPVNNN) are enriched in low complexity. Residue Ser-240 is modified to Phosphoserine. Polar residues-rich tracts occupy residues 242–253 (KSLSNKINNQAA) and 282–293 (RIQSDTVIQSTP). A Phosphothreonine modification is found at Thr-292. A phosphoserine mark is found at Ser-332 and Ser-335. 2 stretches are compositionally biased toward polar residues: residues 375–396 (SLTS…NMTV) and 462–478 (EPPS…NNSP). Disordered regions lie at residues 375–416 (SLTS…DSSV), 453–486 (RNPP…SLQG), 522–579 (TNLK…ERKK), and 593–647 (RNFD…TLNL). 2 stretches are compositionally biased toward basic and acidic residues: residues 528–541 (NEND…SRRE) and 593–602 (RNFDLPSDHV). A compositionally biased stretch (polar residues) spans 621–647 (KTETANITSEAPTTSEVTLENSETLNL).

This sequence belongs to the shugoshin family.

The protein resides in the chromosome. Its subcellular location is the centromere. Involved in chromosome cohesion during mitosis and meiosis by preventing premature dissociation of cohesin complex from centromeres after prophase, when most of cohesin complex dissociates from chromosomes arms. Required for faithful mitotic chromosome segregation and proper kinetochore orientation during meiosis I. In contrast to sgo1, it is dispensable for centromeric protection of rec8 during meiosis I as well as protection of rad21 during mitosis. Required to sense the lack of tension at centromeres during mitosis. This is Shugoshin-2 (sgo2) from Schizosaccharomyces pombe (strain 972 / ATCC 24843) (Fission yeast).